The primary structure comprises 627 residues: 1-deoxy-D-xylulose-5-phosphate synthase (627 aa).

Thiamine diphosphate is bound by residues H75 and 116–118; that span reads AHS. Position 147 (D147) interacts with Mg(2+). Residues 148 to 149, N177, Y284, and E366 contribute to the thiamine diphosphate site; that span reads GA. N177 contacts Mg(2+).

This sequence belongs to the transketolase family. DXPS subfamily. Homodimer. Mg(2+) serves as cofactor. It depends on thiamine diphosphate as a cofactor.

It catalyses the reaction D-glyceraldehyde 3-phosphate + pyruvate + H(+) = 1-deoxy-D-xylulose 5-phosphate + CO2. It participates in metabolic intermediate biosynthesis; 1-deoxy-D-xylulose 5-phosphate biosynthesis; 1-deoxy-D-xylulose 5-phosphate from D-glyceraldehyde 3-phosphate and pyruvate: step 1/1. Its function is as follows. Catalyzes the acyloin condensation reaction between C atoms 2 and 3 of pyruvate and glyceraldehyde 3-phosphate to yield 1-deoxy-D-xylulose-5-phosphate (DXP). The chain is 1-deoxy-D-xylulose-5-phosphate synthase from Bordetella petrii (strain ATCC BAA-461 / DSM 12804 / CCUG 43448).